The sequence spans 120 residues: Large ribosomal subunit protein uL24 (120 aa).

The disordered stretch occupies residues 1–33 (MTRQPHKQRNRQERAALHEKQKQVRAPLSPELR). Residues 10–22 (NRQERAALHEKQK) are compositionally biased toward basic and acidic residues.

The protein belongs to the universal ribosomal protein uL24 family. In terms of assembly, part of the 50S ribosomal subunit.

One of two assembly initiator proteins, it binds directly to the 5'-end of the 23S rRNA, where it nucleates assembly of the 50S subunit. Its function is as follows. Located at the polypeptide exit tunnel on the outside of the subunit. In Natronomonas pharaonis (strain ATCC 35678 / DSM 2160 / CIP 103997 / JCM 8858 / NBRC 14720 / NCIMB 2260 / Gabara) (Halobacterium pharaonis), this protein is Large ribosomal subunit protein uL24.